A 1703-amino-acid chain; its full sequence is Ferlin 2 (1703 aa).

2 consecutive C2 domains span residues 18-141 (IRKL…KTWL) and 207-332 (KQPV…FRWF). Disordered stretches follow at residues 913–937 (NQFN…FDDN), 970–1025 (NLDK…TSST), and 1194–1228 (KNKS…QKLG). Over residues 916–928 (NDDDEGDNEDEQD) the composition is skewed to acidic residues. Positions 979-991 (QPQSLKNLQNLDS) are enriched in polar residues. Over residues 993–1009 (SKADQKSQFDLKSESKS) the composition is skewed to basic and acidic residues. Low complexity predominate over residues 1198-1209 (NRSSMSLSMRSS). Residues 1466 to 1595 (VARIIPPSTI…LKKLKEGIVF (130 aa)) form the C2 3 domain. Positions 1628-1651 (AAESDPVGEGQNEPNKDPILEKPK) are disordered. Residues 1641 to 1651 (PNKDPILEKPK) show a composition bias toward basic and acidic residues. A helical transmembrane segment spans residues 1681–1701 (FAGIFVSIVTMMILFVKPGIL).

The protein belongs to the ferlin family.

The protein localises to the membrane. Regulates mucocyst exocytosis. The polypeptide is Ferlin 2 (Tetrahymena thermophila (strain SB210)).